Consider the following 473-residue polypeptide: Bifunctional protein HldE (473 aa).

Residues 1–317 (MKLSMPRFDQ…RRAVQREQGS (317 aa)) form a ribokinase region. Position 194–197 (194–197 (NLSE)) interacts with ATP. Residue aspartate 263 is part of the active site. The cytidylyltransferase stretch occupies residues 343-473 (FTNGCFDILH…TAIVEKIRQR (131 aa)).

This sequence in the N-terminal section; belongs to the carbohydrate kinase PfkB family. In the C-terminal section; belongs to the cytidylyltransferase family. Homodimer.

It carries out the reaction D-glycero-beta-D-manno-heptose 7-phosphate + ATP = D-glycero-beta-D-manno-heptose 1,7-bisphosphate + ADP + H(+). The catalysed reaction is D-glycero-beta-D-manno-heptose 1-phosphate + ATP + H(+) = ADP-D-glycero-beta-D-manno-heptose + diphosphate. The protein operates within nucleotide-sugar biosynthesis; ADP-L-glycero-beta-D-manno-heptose biosynthesis; ADP-L-glycero-beta-D-manno-heptose from D-glycero-beta-D-manno-heptose 7-phosphate: step 1/4. It participates in nucleotide-sugar biosynthesis; ADP-L-glycero-beta-D-manno-heptose biosynthesis; ADP-L-glycero-beta-D-manno-heptose from D-glycero-beta-D-manno-heptose 7-phosphate: step 3/4. Catalyzes the phosphorylation of D-glycero-D-manno-heptose 7-phosphate at the C-1 position to selectively form D-glycero-beta-D-manno-heptose-1,7-bisphosphate. Its function is as follows. Catalyzes the ADP transfer from ATP to D-glycero-beta-D-manno-heptose 1-phosphate, yielding ADP-D-glycero-beta-D-manno-heptose. This chain is Bifunctional protein HldE, found in Pseudomonas aeruginosa (strain LESB58).